The primary structure comprises 305 residues: Ribosomal RNA small subunit methyltransferase H (305 aa).

S-adenosyl-L-methionine is bound by residues 33–35, Asp-51, Phe-78, Asp-96, and Gln-103; that span reads GGY.

Belongs to the methyltransferase superfamily. RsmH family.

The protein localises to the cytoplasm. The enzyme catalyses cytidine(1402) in 16S rRNA + S-adenosyl-L-methionine = N(4)-methylcytidine(1402) in 16S rRNA + S-adenosyl-L-homocysteine + H(+). In terms of biological role, specifically methylates the N4 position of cytidine in position 1402 (C1402) of 16S rRNA. The polypeptide is Ribosomal RNA small subunit methyltransferase H (Rickettsia bellii (strain RML369-C)).